The sequence spans 159 residues: Small ribosomal subunit protein uS19 (159 aa).

Belongs to the universal ribosomal protein uS19 family.

Functionally, protein S19 forms a complex with S13 that binds strongly to the 16S ribosomal RNA. The sequence is that of Small ribosomal subunit protein uS19 from Pyrobaculum arsenaticum (strain DSM 13514 / JCM 11321 / PZ6).